A 263-amino-acid polypeptide reads, in one-letter code: Indolethylamine N-methyltransferase (263 aa).

Lys13 bears the N6-succinyllysine mark. Residues Tyr20, Tyr25, 63–64 (GS), Tyr69, Asp85, and Asn90 contribute to the S-adenosyl-L-methionine site. Position 96 is an N6-succinyllysine (Lys96). S-adenosyl-L-methionine-binding positions include 142 to 143 (DV) and Leu163.

This sequence belongs to the class I-like SAM-binding methyltransferase superfamily. NNMT/PNMT/TEMT family. As to quaternary structure, monomer.

Its subcellular location is the cytoplasm. It catalyses the reaction a tertiary amine + S-adenosyl-L-methionine = a methylated tertiary amine + S-adenosyl-L-homocysteine + H(+). It carries out the reaction a secondary amine + S-adenosyl-L-methionine = a methylated secondary amine + S-adenosyl-L-homocysteine + H(+). The enzyme catalyses a primary amine + S-adenosyl-L-methionine = a methylated primary amine + S-adenosyl-L-homocysteine + H(+). The catalysed reaction is dimethyl sulfide + S-adenosyl-L-methionine = trimethylsulfonium + S-adenosyl-L-homocysteine. Its function is as follows. Catalyzes the N-methylation of tryptamine and structurally related compounds. Functions as a thioether S-methyltransferase and is active with a variety of thioethers and the corresponding selenium and tellurium compounds, including 3-methylthiopropionaldehyde, dimethyl selenide, dimethyl telluride, 2-methylthioethylamine, 2-methylthioethanol, methyl-n-propyl sulfide and diethyl sulfide. Plays an important role in the detoxification of selenium compounds. The sequence is that of Indolethylamine N-methyltransferase (INMT) from Pongo abelii (Sumatran orangutan).